Reading from the N-terminus, the 155-residue chain is Ribosomal RNA large subunit methyltransferase H (155 aa).

S-adenosyl-L-methionine contacts are provided by residues Leu72, Gly103, and 122-127 (LSPLTL).

The protein belongs to the RNA methyltransferase RlmH family. In terms of assembly, homodimer.

It is found in the cytoplasm. It catalyses the reaction pseudouridine(1915) in 23S rRNA + S-adenosyl-L-methionine = N(3)-methylpseudouridine(1915) in 23S rRNA + S-adenosyl-L-homocysteine + H(+). Its function is as follows. Specifically methylates the pseudouridine at position 1915 (m3Psi1915) in 23S rRNA. This Actinobacillus pleuropneumoniae serotype 3 (strain JL03) protein is Ribosomal RNA large subunit methyltransferase H.